The following is a 142-amino-acid chain: Organic hydroperoxide resistance protein-like 2 (142 aa).

Belongs to the OsmC/Ohr family.

In Staphylococcus epidermidis (strain ATCC 35984 / DSM 28319 / BCRC 17069 / CCUG 31568 / BM 3577 / RP62A), this protein is Organic hydroperoxide resistance protein-like 2.